Reading from the N-terminus, the 555-residue chain is MPTTVDDVLEHGGEFHFFQKQMFFLLALLSATFTPIYVGIVFLGFTPDHRCRSPGVAELSLRCGWSPAEELNYTVPGPGPAGEASPRQCGRYEVDWNQSAFGCVDPLASLDTNRSRLPLGPCREGWVYETPGSSIVTEFNLVCANSWMLDLFQASVNVGFFFGSVSIGYIADRFGRKLCLLTTVLINAAAGVLMAISPTYTWMLIFRLIQGLVSKAGWLIGYILITEFVGRRYRRTVGIFYQVAYTVGLLVLAGVAYALPHWRWLQFTVTLPNFFFLLYYWCIPESPRWLISQNKNAEAMRIIKHIAKKNGKSLPASLQCLRLEEETGEKLNPSFLDLVRTPQIRKHTMILMYNWFTSSVLYQGLIMHMGLAGDNIYLDFFYSALVEFPAAFMIIVTIDRIGRRYPWAASNMVAGAACLASVFIPGDLQWLKIIISCLGRMGITMAYEIVRLVNAELYPTFIRNLGVHICSSMCDIGGIITPFLVYRLTNIWLELPLMVFGVLGLVAGGLVLLLPETKGKALPETIEEAENMQRPRKNKEKMIYLQVQKLDIPLN.

At 1-21 the chain is on the cytoplasmic side; that stretch reads MPTTVDDVLEHGGEFHFFQKQ. A helical transmembrane segment spans residues 22–42; it reads MFFLLALLSATFTPIYVGIVF. The Extracellular portion of the chain corresponds to 43–150; it reads LGFTPDHRCR…LVCANSWMLD (108 aa). N-linked (GlcNAc...) asparagine glycosylation is present at asparagine 72. The helical transmembrane segment at 151–171 threads the bilayer; that stretch reads LFQASVNVGFFFGSVSIGYIA. At 172 to 177 the chain is on the cytoplasmic side; the sequence is DRFGRK. The chain crosses the membrane as a helical span at residues 178–198; the sequence is LCLLTTVLINAAAGVLMAISP. The Extracellular portion of the chain corresponds to 199–210; it reads TYTWMLIFRLIQ. The chain crosses the membrane as a helical span at residues 211–231; that stretch reads GLVSKAGWLIGYILITEFVGR. The Cytoplasmic segment spans residues 232-238; it reads RYRRTVG. The helical transmembrane segment at 239-259 threads the bilayer; sequence IFYQVAYTVGLLVLAGVAYAL. At 260 to 263 the chain is on the extracellular side; that stretch reads PHWR. The chain crosses the membrane as a helical span at residues 264–284; it reads WLQFTVTLPNFFFLLYYWCIP. The short motif at 284-288 is the Proline-rich sequence element; sequence PESPR. Topologically, residues 285-348 are cytoplasmic; that stretch reads ESPRWLISQN…VRTPQIRKHT (64 aa). Residues 349–369 traverse the membrane as a helical segment; that stretch reads MILMYNWFTSSVLYQGLIMHM. Over 370 to 375 the chain is Extracellular; it reads GLAGDN. Residues 376 to 396 form a helical membrane-spanning segment; the sequence is IYLDFFYSALVEFPAAFMIIV. Residues 397–404 are Cytoplasmic-facing; it reads TIDRIGRR. The helical transmembrane segment at 405–425 threads the bilayer; that stretch reads YPWAASNMVAGAACLASVFIP. Residues 426 to 432 lie on the Extracellular side of the membrane; it reads GDLQWLK. A helical transmembrane segment spans residues 433–453; that stretch reads IIISCLGRMGITMAYEIVRLV. Topologically, residues 454–464 are cytoplasmic; the sequence is NAELYPTFIRN. The chain crosses the membrane as a helical span at residues 465 to 485; the sequence is LGVHICSSMCDIGGIITPFLV. At 486–494 the chain is on the extracellular side; sequence YRLTNIWLE. A helical membrane pass occupies residues 495–515; that stretch reads LPLMVFGVLGLVAGGLVLLLP. At 516-555 the chain is on the cytoplasmic side; it reads ETKGKALPETIEEAENMQRPRKNKEKMIYLQVQKLDIPLN.

The protein belongs to the major facilitator (TC 2.A.1) superfamily. Organic cation transporter (TC 2.A.1.19) family. Post-translationally, tyrosine phosphorylated.

The protein resides in the basolateral cell membrane. It is found in the basal cell membrane. The protein localises to the apical cell membrane. It carries out the reaction (R)-noradrenaline(out) = (R)-noradrenaline(in). It catalyses the reaction (R)-adrenaline(out) = (R)-adrenaline(in). The catalysed reaction is serotonin(out) = serotonin(in). The enzyme catalyses dopamine(out) = dopamine(in). It carries out the reaction histamine(out) = histamine(in). It catalyses the reaction thiamine(in) = thiamine(out). The catalysed reaction is creatinine(in) = creatinine(out). The enzyme catalyses 1-methylnicotinamide(out) = 1-methylnicotinamide(in). It carries out the reaction guanidine(out) = guanidine(in). It catalyses the reaction choline(out) = choline(in). The catalysed reaction is agmatine(out) = agmatine(in). The enzyme catalyses putrescine(out) = putrescine(in). It carries out the reaction spermidine(in) = spermidine(out). It catalyses the reaction tyramine(in) = tyramine(out). The catalysed reaction is L-histidyl-L-proline diketopiperazine(in) = L-histidyl-L-proline diketopiperazine(out). The enzyme catalyses (R)-salsolinol(in) = (R)-salsolinol(out). It carries out the reaction N-methyl-(R)-salsolinol(in) = N-methyl-(R)-salsolinol(out). It catalyses the reaction acetylcholine(in) = acetylcholine(out). The catalysed reaction is prostaglandin F2alpha(out) = prostaglandin F2alpha(in). The enzyme catalyses prostaglandin E2(out) = prostaglandin E2(in). Its activity is regulated as follows. Tyrosine phosphorylation of the transporter leads to activation of the transport activity. Inhibited by cGMP, most likely through a cGMP-binding protein that interacts with OCT2. In terms of biological role, electrogenic voltage-dependent transporter that mediates the transport of a variety of organic cations such as endogenous bioactive amines, cationic drugs and xenobiotics. Functions as a Na(+)-independent, bidirectional uniporter. Cation cellular uptake or release is driven by the electrochemical potential, i.e. membrane potential and concentration gradient. However, may also engage electroneutral cation exchange when saturating concentrations of cation substrates are reached. Predominantly expressed at the basolateral membrane of hepatocytes and proximal tubules and involved in the uptake and disposition of cationic compounds by hepatic and renal clearance from the blood flow. Implicated in monoamine neurotransmitters uptake such as histamine, dopamine, adrenaline/epinephrine, noradrenaline/norepinephrine, serotonin and tyramine, thereby supporting a physiological role in the central nervous system by regulating interstitial concentrations of neurotransmitters. Also capable of transporting dopaminergic neuromodulators cyclo(his-pro), salsolinol and N-methyl-salsolinol, thereby involved in the maintenance of dopaminergic cell integrity in the central nervous system. Mediates the bidirectional transport of acetylcholine (ACh) at the apical membrane of ciliated cell in airway epithelium, thereby playing a role in luminal release of ACh from bronchial epithelium. Also transports guanidine and endogenous monoamines such as vitamin B1/thiamine, creatinine and N-1-methylnicotinamide (NMN). Mediates the uptake and efflux of quaternary ammonium compound choline. Mediates the bidirectional transport of polyamine agmatine and the uptake of polyamines putrescine and spermidine. Able to transport non-amine endogenous compounds such as prostaglandin E2 (PGE2) and prostaglandin F2-alpha (PGF2-alpha). Also involved in the uptake of xenobiotic 4-(4-(dimethylamino)styryl)-N-methylpyridinium (ASP). May contribute to regulate the transport of organic compounds in testis across the blood-testis-barrier. This chain is Solute carrier family 22 member 2 (SLC22A2), found in Pongo abelii (Sumatran orangutan).